The sequence spans 237 residues: Demethylmenaquinone methyltransferase (237 aa).

S-adenosyl-L-methionine is bound by residues Thr58, Asp79, and 106–107; that span reads NA.

This sequence belongs to the class I-like SAM-binding methyltransferase superfamily. MenG/UbiE family.

It catalyses the reaction a 2-demethylmenaquinol + S-adenosyl-L-methionine = a menaquinol + S-adenosyl-L-homocysteine + H(+). Its pathway is quinol/quinone metabolism; menaquinone biosynthesis; menaquinol from 1,4-dihydroxy-2-naphthoate: step 2/2. Functionally, methyltransferase required for the conversion of demethylmenaquinol (DMKH2) to menaquinol (MKH2). The protein is Demethylmenaquinone methyltransferase of Listeria innocua serovar 6a (strain ATCC BAA-680 / CLIP 11262).